A 197-amino-acid polypeptide reads, in one-letter code: dITP/XTP pyrophosphatase (197 aa).

8–13 (TGNVGK) lines the substrate pocket. Mg(2+)-binding residues include Glu-40 and Asp-69. The Proton acceptor role is filled by Asp-69. Substrate-binding positions include Ser-70, 154–157 (FGYD), Lys-177, and 182–183 (HR).

It belongs to the HAM1 NTPase family. In terms of assembly, homodimer. The cofactor is Mg(2+). Mn(2+) serves as cofactor. Requires Ni(2+) as cofactor.

It catalyses the reaction XTP + H2O = XMP + diphosphate + H(+). The enzyme catalyses dITP + H2O = dIMP + diphosphate + H(+). It carries out the reaction ITP + H2O = IMP + diphosphate + H(+). In terms of biological role, pyrophosphatase that catalyzes the hydrolysis of nucleoside triphosphates to their monophosphate derivatives, with a high preference for the non-canonical purine nucleotides XTP (xanthosine triphosphate), dITP (deoxyinosine triphosphate) and ITP. Can also efficiently hydrolyze 2'-deoxy-N-6-hydroxylaminopurine triphosphate (dHAPTP). Seems to function as a house-cleaning enzyme that removes non-canonical purine nucleotides from the nucleotide pool, thus preventing their incorporation into DNA/RNA and avoiding chromosomal lesions. To a much lesser extent, is also able to hydrolyze GTP, dGTP and dUTP, but shows very low activity toward the canonical nucleotides dATP, dCTP and dTTP and toward 8-oxo-dGTP, purine deoxyribose triphosphate, 2-aminopurine deoxyribose triphosphate and 2,6-diaminopurine deoxyribose triphosphate. Its function is as follows. Genetic interactions among priB, dam, lexA, nagC, polA, rdgB, rdgB, rep and uup link the PriA-PriB replication restart pathway to DNA double-strand break repair. The protein is dITP/XTP pyrophosphatase of Escherichia coli (strain K12).